Here is a 293-residue protein sequence, read N- to C-terminus: Coatomer subunit epsilon-2 (293 aa).

Belongs to the COPE family. As to quaternary structure, oligomeric complex that consists of at least the alpha, beta, beta', gamma, delta, epsilon and zeta subunits.

Its subcellular location is the cytoplasm. It localises to the golgi apparatus membrane. The protein localises to the cytoplasmic vesicle. The protein resides in the COPI-coated vesicle membrane. The coatomer is a cytosolic protein complex that binds to dilysine motifs and reversibly associates with Golgi non-clathrin-coated vesicles, which further mediate biosynthetic protein transport from the ER, via the Golgi up to the trans Golgi network. The coatomer complex is required for budding from Golgi membranes, and is essential for the retrograde Golgi-to-ER transport of dilysine-tagged proteins. In Arabidopsis thaliana (Mouse-ear cress), this protein is Coatomer subunit epsilon-2.